An 869-amino-acid chain; its full sequence is Phenylalanine--tRNA ligase beta subunit (869 aa).

The tRNA-binding domain occupies 41 to 162 (SQVTGPIVVG…QYGFSEAEYE (122 aa)). The 77-residue stretch at 443–519 (PRAKAIHFKA…RLVGYDQIPI (77 aa)) folds into the B5 domain. Positions 497, 503, 506, and 507 each coordinate Mg(2+). In terms of domain architecture, FDX-ACB spans 776–868 (STFPPVKQDL…EAAEIGAQLR (93 aa)).

It belongs to the phenylalanyl-tRNA synthetase beta subunit family. Type 1 subfamily. Tetramer of two alpha and two beta subunits. Mg(2+) serves as cofactor.

It is found in the cytoplasm. It carries out the reaction tRNA(Phe) + L-phenylalanine + ATP = L-phenylalanyl-tRNA(Phe) + AMP + diphosphate + H(+). This chain is Phenylalanine--tRNA ligase beta subunit, found in Bifidobacterium longum (strain NCC 2705).